The primary structure comprises 399 residues: Na(+)/H(+) antiporter NhaA (399 aa).

A run of 11 helical transmembrane segments spans residues 12–32 (LDIA…IAAN), 60–80 (LLLW…GLEI), 94–114 (LAAL…LIYA), 126–146 (GWAI…TLLG), 155–175 (IFLT…IAFF), 178–198 (ASLS…LIGL), 206–226 (LWPY…SGVH), 263–283 (PWVT…VSLA), 284–304 (GLPP…GLFL), 336–356 (GVAL…TLAF), and 372–392 (LGVL…LRLS).

Belongs to the NhaA Na(+)/H(+) (TC 2.A.33) antiporter family.

It localises to the cell inner membrane. The catalysed reaction is Na(+)(in) + 2 H(+)(out) = Na(+)(out) + 2 H(+)(in). Its function is as follows. Na(+)/H(+) antiporter that extrudes sodium in exchange for external protons. This chain is Na(+)/H(+) antiporter NhaA, found in Rhodospirillum rubrum (strain ATCC 11170 / ATH 1.1.1 / DSM 467 / LMG 4362 / NCIMB 8255 / S1).